A 599-amino-acid chain; its full sequence is Phosphomethylpyrimidine synthase (599 aa).

The segment covering 1–16 (MSAASANSVTNPSAWE) has biased composition (polar residues). 2 disordered regions span residues 1 to 53 (MSAA…PNDP) and 82 to 108 (EDTE…GAAS). Residues 87–100 (YAGRERNLADDGRS) show a composition bias toward basic and acidic residues. Substrate is bound by residues N192, M221, Y250, H286, 306–308 (SRG), 347–350 (DGLR), and E386. Zn(2+) is bound at residue H390. Y413 provides a ligand contact to substrate. Residue H454 coordinates Zn(2+). Positions 534, 537, and 542 each coordinate [4Fe-4S] cluster.

The protein belongs to the ThiC family. [4Fe-4S] cluster is required as a cofactor.

It catalyses the reaction 5-amino-1-(5-phospho-beta-D-ribosyl)imidazole + S-adenosyl-L-methionine = 4-amino-2-methyl-5-(phosphooxymethyl)pyrimidine + CO + 5'-deoxyadenosine + formate + L-methionine + 3 H(+). It functions in the pathway cofactor biosynthesis; thiamine diphosphate biosynthesis. Catalyzes the synthesis of the hydroxymethylpyrimidine phosphate (HMP-P) moiety of thiamine from aminoimidazole ribotide (AIR) in a radical S-adenosyl-L-methionine (SAM)-dependent reaction. The sequence is that of Phosphomethylpyrimidine synthase from Corynebacterium diphtheriae (strain ATCC 700971 / NCTC 13129 / Biotype gravis).